The sequence spans 211 residues: MANSGLQLLGFSMAMLGWVGLIASTAIPQWQMSSYAGDNIITAQAMYKGLWMECVTQSTGMMSCKMYDSVLALPGALQATRALMVVSLVLGFLAMFVATMGMKCTRCGGDDKAKKARIAMTGGIVFIVAGLAALVACSWIGHQIVTDFYNPLTPMNVKYEFGPAIFIGWAGSALVLLGGALLSCSCPGSESKAAYRAPRSYPKSNSSKEYV.

Over M1–Q7 the chain is Cytoplasmic. A helical transmembrane segment spans residues L8–P28. Topologically, residues Q29–R81 are extracellular. The helical transmembrane segment at A82 to M102 threads the bilayer. Over K103–A119 the chain is Cytoplasmic. The chain crosses the membrane as a helical span at residues M120–I140. Residues G141 to E160 are Extracellular-facing. A helical transmembrane segment spans residues F161–L181. Topologically, residues L182–V211 are cytoplasmic. The interactions with TJP1, TJP2 and TJP3 stretch occupies residues Y210–V211.

The protein belongs to the claudin family. As to quaternary structure, directly interacts with TJP1/ZO-1, TJP2/ZO-2 and TJP3/ZO-3. The phosphorylated form interacts with EPCAM. In terms of processing, phosphorylated. Expressed predominantly in lung and kidney.

It is found in the cell membrane. The protein resides in the basolateral cell membrane. Its subcellular location is the cell junction. It localises to the tight junction. Its function is as follows. Plays a major role in tight junction-specific obliteration of the intercellular space, through calcium-independent cell-adhesion activity. The sequence is that of Claudin-7 (Cldn7) from Mus musculus (Mouse).